We begin with the raw amino-acid sequence, 295 residues long: Protoheme IX farnesyltransferase (295 aa).

9 helical membrane passes run 27 to 46 (IMYL…PGSI), 50 to 72 (IAII…NMWY), 93 to 115 (ISKS…VMMI), 119 to 136 (YISG…SFAY), 148 to 168 (IVIG…SVTS), 175 to 195 (LILF…LSLL), 219 to 239 (VHIL…GLFL), 244 to 264 (LYEI…FKVF), and 275 to 295 (MFTY…LASF).

This sequence belongs to the UbiA prenyltransferase family. Protoheme IX farnesyltransferase subfamily.

Its subcellular location is the cell inner membrane. It carries out the reaction heme b + (2E,6E)-farnesyl diphosphate + H2O = Fe(II)-heme o + diphosphate. It functions in the pathway porphyrin-containing compound metabolism; heme O biosynthesis; heme O from protoheme: step 1/1. In terms of biological role, converts heme B (protoheme IX) to heme O by substitution of the vinyl group on carbon 2 of heme B porphyrin ring with a hydroxyethyl farnesyl side group. The chain is Protoheme IX farnesyltransferase from Ehrlichia canis (strain Jake).